The following is a 253-amino-acid chain: Ubiquinone/menaquinone biosynthesis C-methyltransferase UbiE (253 aa).

S-adenosyl-L-methionine is bound by residues threonine 76, aspartate 97, and asparagine 125–alanine 126.

It belongs to the class I-like SAM-binding methyltransferase superfamily. MenG/UbiE family.

It catalyses the reaction a 2-demethylmenaquinol + S-adenosyl-L-methionine = a menaquinol + S-adenosyl-L-homocysteine + H(+). The catalysed reaction is a 2-methoxy-6-(all-trans-polyprenyl)benzene-1,4-diol + S-adenosyl-L-methionine = a 5-methoxy-2-methyl-3-(all-trans-polyprenyl)benzene-1,4-diol + S-adenosyl-L-homocysteine + H(+). Its pathway is quinol/quinone metabolism; menaquinone biosynthesis; menaquinol from 1,4-dihydroxy-2-naphthoate: step 2/2. The protein operates within cofactor biosynthesis; ubiquinone biosynthesis. In terms of biological role, methyltransferase required for the conversion of demethylmenaquinol (DMKH2) to menaquinol (MKH2) and the conversion of 2-polyprenyl-6-methoxy-1,4-benzoquinol (DDMQH2) to 2-polyprenyl-3-methyl-6-methoxy-1,4-benzoquinol (DMQH2). This chain is Ubiquinone/menaquinone biosynthesis C-methyltransferase UbiE, found in Stenotrophomonas maltophilia (strain R551-3).